Here is a 311-residue protein sequence, read N- to C-terminus: MKVAVLGAAGGIGQALALLLKLQLPAGTDLALYDIAPVTPGVAVDVSHIPTAVNVKGFSGEDPTPALEGADVVLISAGVARKPGMDRSDLFNINAGIVRGLIEKVAITCPKACVGIITNPVNTTVAIAAEVLKKAGVYDKRKLFGVTTLDVLRSETFVAELKGLNVSRTSVPVIGGHSGVTILPLLSQVQYAKWNEDEIEPLAKRIQNAGTEVVNAKAGGGSATLSMAQAAARFARSLVKGLSGETVVECTYVEGDGKYARFFSQPVRLGKEGVEEILPIGPLSNFEQQALENMLPTLRADIELGEKFING.

NAD(+)-binding positions include 7–13 and Asp34; that span reads GAAGGIG. 2 residues coordinate substrate: Arg81 and Arg87. Residues Asn94 and 117 to 119 contribute to the NAD(+) site; that span reads ITN. The substrate site is built by Asn119 and Arg153. His177 (proton acceptor) is an active-site residue. Met227 serves as a coordination point for NAD(+).

This sequence belongs to the LDH/MDH superfamily. MDH type 1 family. In terms of assembly, homodimer.

The catalysed reaction is (S)-malate + NAD(+) = oxaloacetate + NADH + H(+). In terms of biological role, catalyzes the reversible oxidation of malate to oxaloacetate. This Haemophilus influenzae (strain 86-028NP) protein is Malate dehydrogenase.